Reading from the N-terminus, the 698-residue chain is Iron-sulfur clusters transporter ATM1, mitochondrial (698 aa).

Residues 1-23 (MIPQLLQRSSRACPRYNPALYRL) constitute a mitochondrion transit peptide. Topologically, residues 24–113 (STTSQQRPGL…PKDDWGTKLR (90 aa)) are mitochondrial matrix. Positions 32–63 (GLTQTFWTSAPRREQPRTPTDSKPTTTKPSAV) are disordered. Residues 48 to 61 (RTPTDSKPTTTKPS) are compositionally biased toward low complexity. The helical transmembrane segment at 114 to 135 (VSLAVSLLIGAKVLNVQVPFYF) threads the bilayer. Residues 114–404 (VSLAVSLLIG…LGSVYRELRQ (291 aa)) enclose the ABC transmembrane type-1 domain. Residues 136 to 158 (KSIVDSMNIDVAAVGGTATTVAG) are Mitochondrial intermembrane-facing. A helical transmembrane segment spans residues 159 to 182 (AMILAYGASRIGATVFQELRNAVF). Residues 183–231 (ASVAQNAIRKVACNVFDHLLRLDLTFHLSKQTGGLTRALDRGTKGISFI) are Mitochondrial matrix-facing. Residues 232-255 (LSSMVFHVLPTALEISMVCGILTY) traverse the membrane as a helical segment. Asn-256 is a topological domain (mitochondrial intermembrane). A helical transmembrane segment spans residues 257 to 277 (YGAKFAALTVLTMVSYTAFTI). Residues 278 to 343 (WTTAWRTKFR…NSIKVATSLA (66 aa)) are Mitochondrial matrix-facing. Residues 283–287 (RTKFR) and 346–349 (NSGQ) contribute to the glutathione site. The chain crosses the membrane as a helical span at residues 344-362 (LLNSGQNIIFSSALTGMMY). Residues 363–377 (LAANGVAEGTLTVGD) are Mitochondrial intermembrane-facing. A helical transmembrane segment spans residues 378–399 (LVMVNQLVFQLSVPLNFLGSVY). Gly-396 contributes to the glutathione binding site. Over 400 to 698 (RELRQSLLDM…EEENDEQKKN (299 aa)) the chain is Mitochondrial matrix. The 237-residue stretch at 439-675 (IKFENVNFAY…DGVYAELWSA (237 aa)) folds into the ABC transporter domain. ATP contacts are provided by residues Tyr-448 and 472 to 483 (GPSGCGKSTLLR). The tract at residues 679–698 (MFGEDGKEKSEEENDEQKKN) is disordered. Residues 682–698 (EDGKEKSEEENDEQKKN) are compositionally biased toward basic and acidic residues.

This sequence belongs to the ABC transporter superfamily. ABCB family. Heavy Metal importer (TC 3.A.1.210) subfamily. In terms of assembly, homodimer.

The protein localises to the mitochondrion inner membrane. Its function is as follows. Performs an essential function in the generation of cytoplasmic iron-sulfur proteins by mediating the ATP-dependent export of Fe/S cluster precursors synthesized by NFS1 and other mitochondrial proteins. Hydrolyzes ATP. Binds glutathione and may function by transporting a glutathione-conjugated iron-sulfur compound. The chain is Iron-sulfur clusters transporter ATM1, mitochondrial from Gibberella zeae (strain ATCC MYA-4620 / CBS 123657 / FGSC 9075 / NRRL 31084 / PH-1) (Wheat head blight fungus).